The primary structure comprises 154 residues: 6,7-dimethyl-8-ribityllumazine synthase (154 aa).

5-amino-6-(D-ribitylamino)uracil-binding positions include Phe26, 60–62, and 84–86; these read ALE and CII. Position 89–90 (89–90) interacts with (2S)-2-hydroxy-3-oxobutyl phosphate; that stretch reads ET. The active-site Proton donor is His92. 5-amino-6-(D-ribitylamino)uracil is bound at residue Asn117. Position 131 (Arg131) interacts with (2S)-2-hydroxy-3-oxobutyl phosphate.

It belongs to the DMRL synthase family.

It catalyses the reaction (2S)-2-hydroxy-3-oxobutyl phosphate + 5-amino-6-(D-ribitylamino)uracil = 6,7-dimethyl-8-(1-D-ribityl)lumazine + phosphate + 2 H2O + H(+). Its pathway is cofactor biosynthesis; riboflavin biosynthesis; riboflavin from 2-hydroxy-3-oxobutyl phosphate and 5-amino-6-(D-ribitylamino)uracil: step 1/2. Its function is as follows. Catalyzes the formation of 6,7-dimethyl-8-ribityllumazine by condensation of 5-amino-6-(D-ribitylamino)uracil with 3,4-dihydroxy-2-butanone 4-phosphate. This is the penultimate step in the biosynthesis of riboflavin. The sequence is that of 6,7-dimethyl-8-ribityllumazine synthase from Paracidovorax citrulli (strain AAC00-1) (Acidovorax citrulli).